A 415-amino-acid chain; its full sequence is Citrate (Re)-synthase (415 aa).

The 272-residue stretch at 4-275 (IFIIDVTNRD…GHEVDLSKAW (272 aa)) folds into the Pyruvate carboxyltransferase domain.

This sequence belongs to the alpha-IPM synthase/homocitrate synthase family. It depends on Mn(2+) as a cofactor.

It carries out the reaction oxaloacetate + acetyl-CoA + H2O = citrate + CoA + H(+). Its activity is regulated as follows. Inhibited by citrate and under aerobic conditions. Functionally, catalyzes the condensation of the acetyl group of acetyl coenzyme A (acetyl-CoA) with oxaloacetate to form citrate. This enzyme is highly Re-face stereospecific with respect to the C-2 of oxaloacetate. This chain is Citrate (Re)-synthase, found in Dehalococcoides mccartyi (strain CBDB1).